The primary structure comprises 257 residues: tRNA pseudouridine synthase A (257 aa).

The Nucleophile role is filled by D52. Position 111 (Y111) interacts with substrate.

The protein belongs to the tRNA pseudouridine synthase TruA family. Homodimer.

The catalysed reaction is uridine(38/39/40) in tRNA = pseudouridine(38/39/40) in tRNA. Functionally, formation of pseudouridine at positions 38, 39 and 40 in the anticodon stem and loop of transfer RNAs. This is tRNA pseudouridine synthase A from Dinoroseobacter shibae (strain DSM 16493 / NCIMB 14021 / DFL 12).